The chain runs to 361 residues: Putative F-box protein At1g33010 (361 aa).

Positions 4–50 constitute an F-box domain; that stretch reads GNTLDSIPTDLILEIFSRLSAKSVGRLRCLSKLWRKGEWFFFSSLQP. A disordered region spans residues 308–339; the sequence is SIRPTEQKHKPTSTETSMSRKDHQVRTIDQPQ.

The protein is Putative F-box protein At1g33010 of Arabidopsis thaliana (Mouse-ear cress).